The chain runs to 231 residues: MAKDGGVSCLRRSEMIGIGIGELESPPLDSDQVHVLAVDDSLVDRIVIERLLRITSCKVTAVDSGWRALEFLGLDDDKAAVEFDRLKVDLIITDYCMPGMTGYELLKKIKESTSFKEVPVVIMSSENVMTRIDRCLEEGAEDFLLKPVKLADVKRLRSYLTRDVKVAAEGNKRKLTTPPPPPPLSATSSMESSDSTVESPLSMVDDEDSLTMSPESATSLVDSPMRSPGLA.

Residues 34–161 (HVLAVDDSLV…DVKRLRSYLT (128 aa)) form the Response regulatory domain. D94 is modified (4-aspartylphosphate). A disordered region spans residues 170–231 (GNKRKLTTPP…DSPMRSPGLA (62 aa)). Low complexity predominate over residues 185 to 199 (SATSSMESSDSTVES). The span at 210-221 (LTMSPESATSLV) shows a compositional bias: polar residues.

This sequence belongs to the ARR family. Type-A subfamily. In terms of processing, two-component system major event consists of a His-to-Asp phosphorelay between a sensor histidine kinase (HK) and a response regulator (RR). In plants, the His-to-Asp phosphorelay involves an additional intermediate named Histidine-containing phosphotransfer protein (HPt). This multistep phosphorelay consists of a His-Asp-His-Asp sequential transfer of a phosphate group between first a His and an Asp of the HK protein, followed by the transfer to a conserved His of the HPt protein and finally the transfer to an Asp in the receiver domain of the RR protein. As to expression, predominantly expressed in roots.

It is found in the nucleus. In terms of biological role, functions as a response regulator involved in His-to-Asp phosphorelay signal transduction system. Phosphorylation of the Asp residue in the receiver domain activates the ability of the protein to promote the transcription of target genes. Type-A response regulators seem to act as negative regulators of the cytokinin signaling. The chain is Two-component response regulator ARR3 (ARR3) from Arabidopsis thaliana (Mouse-ear cress).